The primary structure comprises 363 residues: Peptide chain release factor 1 (363 aa).

At Gln-237 the chain carries N5-methylglutamine. The segment covering 286–296 has biased composition (basic and acidic residues); it reads EKRRSAEESTR. The interval 286-305 is disordered; sequence EKRRSAEESTRRSLVASGDR.

The protein belongs to the prokaryotic/mitochondrial release factor family. In terms of processing, methylated by PrmC. Methylation increases the termination efficiency of RF1.

It localises to the cytoplasm. Functionally, peptide chain release factor 1 directs the termination of translation in response to the peptide chain termination codons UAG and UAA. The chain is Peptide chain release factor 1 from Shewanella baltica (strain OS155 / ATCC BAA-1091).